The following is a 118-amino-acid chain: uncharacterized protein (118 aa).

The tract at residues 25-85 is disordered; sequence AEQPGSGGIA…SSSSTPSRAR (61 aa). The segment covering 71-83 has biased composition (low complexity); sequence RPSASSSSSTPSR.

This is an uncharacterized protein from Azospirillum brasilense.